The following is a 265-amino-acid chain: Tryptophan synthase alpha chain (265 aa).

Residues glutamate 49 and aspartate 60 each act as proton acceptor in the active site.

Belongs to the TrpA family. In terms of assembly, tetramer of two alpha and two beta chains.

The enzyme catalyses (1S,2R)-1-C-(indol-3-yl)glycerol 3-phosphate + L-serine = D-glyceraldehyde 3-phosphate + L-tryptophan + H2O. Its pathway is amino-acid biosynthesis; L-tryptophan biosynthesis; L-tryptophan from chorismate: step 5/5. Its function is as follows. The alpha subunit is responsible for the aldol cleavage of indoleglycerol phosphate to indole and glyceraldehyde 3-phosphate. In Cupriavidus pinatubonensis (strain JMP 134 / LMG 1197) (Cupriavidus necator (strain JMP 134)), this protein is Tryptophan synthase alpha chain.